We begin with the raw amino-acid sequence, 350 residues long: MLISQRPTLSEDVLAENRSQFVIEPLEPGFGYTLGNSLRRTLLSSIPGAAVTSIRIDGVLHEFTTVPGVKEDVTDIILNLKGLVVSSEEDEPVTMYLRKQGPGEVTAGDIVPPAGVTVHNPDMHIATLNDKGKLEVELVVERGRGYVPAVQNKASGAEIGRIPVDSIYSPVLKVTYKVEATRVEQRTDFDKLILDVETKNSITPRDALASAGKTLVELFGLARELNVEAEGIEIGPSPAEADQAAHFALPIDDLDLTVRSYNCLKREGVHTVGELVARTESDLLDIRNFGQKSIDEVKIKLHQLGLSLKDSPASFDPSEVAGYDVATGTWNSDAGYDLEDNQDYAETEQL.

An alpha N-terminal domain (alpha-NTD) region spans residues 1–226 (MLISQRPTLS…ELFGLARELN (226 aa)). The tract at residues 241 to 350 (ADQAAHFALP…NQDYAETEQL (110 aa)) is alpha C-terminal domain (alpha-CTD). Residues 328-350 (GTWNSDAGYDLEDNQDYAETEQL) are disordered. Acidic residues predominate over residues 336 to 350 (YDLEDNQDYAETEQL).

Belongs to the RNA polymerase alpha chain family. As to quaternary structure, homodimer. The RNAP catalytic core consists of 2 alpha, 1 beta, 1 beta' and 1 omega subunit. When a sigma factor is associated with the core the holoenzyme is formed, which can initiate transcription.

The enzyme catalyses RNA(n) + a ribonucleoside 5'-triphosphate = RNA(n+1) + diphosphate. DNA-dependent RNA polymerase catalyzes the transcription of DNA into RNA using the four ribonucleoside triphosphates as substrates. The polypeptide is DNA-directed RNA polymerase subunit alpha (Mycolicibacterium vanbaalenii (strain DSM 7251 / JCM 13017 / BCRC 16820 / KCTC 9966 / NRRL B-24157 / PYR-1) (Mycobacterium vanbaalenii)).